The primary structure comprises 940 residues: PTS system glucose-specific EIICBA component (940 aa).

Residues 1-284 (MQIKAQDTGQ…YAPLWYTSAG (284 aa)) enclose the PTS EIIC type-1; first part domain. The next 5 membrane-spanning stretches (helical) occupy residues 43–63 (LMIP…GDAI), 83–103 (GGDV…AITF), 112–132 (FSAF…ILPF), 175–195 (VFGG…FYAI), and 209–229 (FVPI…LMIW). The interval 285–478 (GSLQEIVNQQ…VNSFRVAVES (194 aa)) is unknown. A PTS EIIC type-1; second part domain is found at 479-630 (LNPAQYSQGK…FNLATPGRGG (152 aa)). 5 helical membrane-spanning segments follow: residues 487–507 (GKFP…ILAA), 515–535 (AASI…TEPF), 537–557 (FTFL…LAAV), 564–584 (ILGA…ILYG), and 598–618 (LVPI…YFLI). The region spanning 661–743 (QIEAGILLQA…QDIIQGKVNW (83 aa)) is the PTS EIIB type-1 domain. Cys683 (phosphocysteine intermediate; for EIIB activity) is an active-site residue. The PTS EIIA type-1 domain maps to 794–907 (DETFKQKLVG…NPITPFVVMK (114 aa)). His847 acts as the Tele-phosphohistidine intermediate; for EIIA activity in catalysis.

The protein localises to the cell membrane. It carries out the reaction N(pros)-phospho-L-histidyl-[protein] + D-glucose(out) = D-glucose 6-phosphate(in) + L-histidyl-[protein]. Functionally, the phosphoenolpyruvate-dependent sugar phosphotransferase system (sugar PTS), a major carbohydrate active transport system, catalyzes the phosphorylation of incoming sugar substrates concomitantly with their translocation across the cell membrane. This system is involved in glucose transport. The protein is PTS system glucose-specific EIICBA component (ptsG) of Mycoplasma pneumoniae (strain ATCC 29342 / M129 / Subtype 1) (Mycoplasmoides pneumoniae).